The primary structure comprises 417 residues: Serine hydroxymethyltransferase (417 aa).

(6S)-5,6,7,8-tetrahydrofolate-binding positions include L117 and 121–123; that span reads GHL. K226 bears the N6-(pyridoxal phosphate)lysine mark.

The protein belongs to the SHMT family. In terms of assembly, homodimer. Pyridoxal 5'-phosphate serves as cofactor.

Its subcellular location is the cytoplasm. The enzyme catalyses (6R)-5,10-methylene-5,6,7,8-tetrahydrofolate + glycine + H2O = (6S)-5,6,7,8-tetrahydrofolate + L-serine. It participates in one-carbon metabolism; tetrahydrofolate interconversion. The protein operates within amino-acid biosynthesis; glycine biosynthesis; glycine from L-serine: step 1/1. Its function is as follows. Catalyzes the reversible interconversion of serine and glycine with tetrahydrofolate (THF) serving as the one-carbon carrier. This reaction serves as the major source of one-carbon groups required for the biosynthesis of purines, thymidylate, methionine, and other important biomolecules. Also exhibits THF-independent aldolase activity toward beta-hydroxyamino acids, producing glycine and aldehydes, via a retro-aldol mechanism. The sequence is that of Serine hydroxymethyltransferase from Syntrophus aciditrophicus (strain SB).